The chain runs to 111 residues: Translation initiation factor 1A (111 aa).

Residues lysine 11 to threonine 83 enclose the S1-like domain.

This sequence belongs to the eIF-1A family.

In terms of biological role, seems to be required for maximal rate of protein biosynthesis. Enhances ribosome dissociation into subunits and stabilizes the binding of the initiator Met-tRNA(I) to 40 S ribosomal subunits. This is Translation initiation factor 1A (eIF1A) from Methanopyrus kandleri (strain AV19 / DSM 6324 / JCM 9639 / NBRC 100938).